A 352-amino-acid polypeptide reads, in one-letter code: 3-isopropylmalate dehydrogenase (352 aa).

76–89 contacts NAD(+); sequence GYKWENLPHDKKPE. Residues arginine 96, arginine 106, arginine 134, and aspartate 220 each coordinate substrate. Mg(2+)-binding residues include aspartate 220, aspartate 244, and aspartate 248. 277–289 is an NAD(+) binding site; it reads GSAPDIAGQNKAN.

The protein belongs to the isocitrate and isopropylmalate dehydrogenases family. LeuB type 1 subfamily. In terms of assembly, homodimer. Mg(2+) is required as a cofactor. The cofactor is Mn(2+).

It is found in the cytoplasm. The enzyme catalyses (2R,3S)-3-isopropylmalate + NAD(+) = 4-methyl-2-oxopentanoate + CO2 + NADH. The protein operates within amino-acid biosynthesis; L-leucine biosynthesis; L-leucine from 3-methyl-2-oxobutanoate: step 3/4. Functionally, catalyzes the oxidation of 3-carboxy-2-hydroxy-4-methylpentanoate (3-isopropylmalate) to 3-carboxy-4-methyl-2-oxopentanoate. The product decarboxylates to 4-methyl-2 oxopentanoate. This Chlorobaculum tepidum (strain ATCC 49652 / DSM 12025 / NBRC 103806 / TLS) (Chlorobium tepidum) protein is 3-isopropylmalate dehydrogenase.